The primary structure comprises 305 residues: MIVTPASIKALMTSWRKDFQGGLEDAPSQYNKIAMVVNSSTRSNTYGWLGKFPTLKEWVGKRTIQQMEAHGYSIANKTFEGTVGISRDDFEDDNLGIYAPIFQEMGRSAAVQPDELIFKLLKDGFTQPCYDGQNFFDKEHPVYPNVDGTGSAVNTSNIVEQDSFSGLPFYLLDCSRAVKPLIFQERRKPELVARTRIDDDHVFMDNEFLFGASTRRAAGYGFWQMAVAVKGDLTLDNLWKGWQLMRSFEGDGGKKLGLKPTHIVVPVGLEKAAEQLLNRELFADGNTTVSNEMKGKLQLVVADYL.

In terms of assembly, part of the immature prohead complex. Interaction between the viral portal protein and the viral protease I may give rise to an early 25S initiator complex. The scaffolding protein Z and the capsid protein T should then be added to the initiator complex to yield immature procapsid. Host GroEL and GroES are also essential for the correct assembly of viral capsids.

The protein resides in the virion. It is found in the host cytoplasm. Its function is as follows. Capsid protein that self-assembles to form an icosahedral capsid, about 54 nm in diameter. The polypeptide is Major capsid protein (T) (Escherichia phage Mu (Bacteriophage Mu)).